Consider the following 489-residue polypeptide: Bifunctional protein HldE (489 aa).

Positions 1–328 are ribokinase; the sequence is METENIHSFD…ELKAQLQDQP (328 aa). 206 to 209 is an ATP binding site; the sequence is NKKE. Asp276 is a catalytic residue. Residues 357-489 are cytidylyltransferase; that stretch reads LTNGCFDLLH…IIQDIRNGRG (133 aa).

The protein in the N-terminal section; belongs to the carbohydrate kinase PfkB family. It in the C-terminal section; belongs to the cytidylyltransferase family. In terms of assembly, homodimer.

The enzyme catalyses D-glycero-beta-D-manno-heptose 7-phosphate + ATP = D-glycero-beta-D-manno-heptose 1,7-bisphosphate + ADP + H(+). The catalysed reaction is D-glycero-beta-D-manno-heptose 1-phosphate + ATP + H(+) = ADP-D-glycero-beta-D-manno-heptose + diphosphate. It participates in nucleotide-sugar biosynthesis; ADP-L-glycero-beta-D-manno-heptose biosynthesis; ADP-L-glycero-beta-D-manno-heptose from D-glycero-beta-D-manno-heptose 7-phosphate: step 1/4. It functions in the pathway nucleotide-sugar biosynthesis; ADP-L-glycero-beta-D-manno-heptose biosynthesis; ADP-L-glycero-beta-D-manno-heptose from D-glycero-beta-D-manno-heptose 7-phosphate: step 3/4. Catalyzes the phosphorylation of D-glycero-D-manno-heptose 7-phosphate at the C-1 position to selectively form D-glycero-beta-D-manno-heptose-1,7-bisphosphate. In terms of biological role, catalyzes the ADP transfer from ATP to D-glycero-beta-D-manno-heptose 1-phosphate, yielding ADP-D-glycero-beta-D-manno-heptose. This chain is Bifunctional protein HldE, found in Desulfatibacillum aliphaticivorans.